Reading from the N-terminus, the 693-residue chain is Elongation factor G (693 aa).

The tr-type G domain maps to 8 to 284 (DMTRNVGIMA…AIVNYMPAPT (277 aa)). Residues 17–24 (AHIDAGKT), 81–85 (DTPGH), and 135–138 (NKMD) each bind GTP.

This sequence belongs to the TRAFAC class translation factor GTPase superfamily. Classic translation factor GTPase family. EF-G/EF-2 subfamily.

The protein resides in the cytoplasm. Its function is as follows. Catalyzes the GTP-dependent ribosomal translocation step during translation elongation. During this step, the ribosome changes from the pre-translocational (PRE) to the post-translocational (POST) state as the newly formed A-site-bound peptidyl-tRNA and P-site-bound deacylated tRNA move to the P and E sites, respectively. Catalyzes the coordinated movement of the two tRNA molecules, the mRNA and conformational changes in the ribosome. This is Elongation factor G from Fusobacterium nucleatum subsp. nucleatum (strain ATCC 25586 / DSM 15643 / BCRC 10681 / CIP 101130 / JCM 8532 / KCTC 2640 / LMG 13131 / VPI 4355).